The sequence spans 478 residues: Trigger factor (478 aa).

The segment covering 154–167 (MAKDSRSFEPREEG) has biased composition (basic and acidic residues). Disordered regions lie at residues 154-173 (MAKD…AQSG) and 444-478 (LFAE…KAAG). A PPIase FKBP-type domain is found at 173 to 258 (GDRVTIDFVG…VKAVAAPGET (86 aa)).

It belongs to the FKBP-type PPIase family. Tig subfamily.

It is found in the cytoplasm. The catalysed reaction is [protein]-peptidylproline (omega=180) = [protein]-peptidylproline (omega=0). Functionally, involved in protein export. Acts as a chaperone by maintaining the newly synthesized protein in an open conformation. Functions as a peptidyl-prolyl cis-trans isomerase. The sequence is that of Trigger factor from Methylorubrum populi (strain ATCC BAA-705 / NCIMB 13946 / BJ001) (Methylobacterium populi).